The chain runs to 157 residues: MMDVLMYLFETYIHSDVELNVEQEKLEDELLKAGFHQEAVYKALDWLEDLARLQDTDEHARVATGTSTSMRIYTQQEIDGINTACRGFLLFLEQIKVLTSETREMVIEQVMALETDELSLDDLKWVVLMVLFNVPGQESAYTQMEELLYTSDVGLTH.

The protein belongs to the Smg family.

In Aliivibrio fischeri (strain MJ11) (Vibrio fischeri), this protein is Protein Smg homolog.